The following is a 941-amino-acid chain: Glycine dehydrogenase (decarboxylating) (941 aa).

At Lys-692 the chain carries N6-(pyridoxal phosphate)lysine.

This sequence belongs to the GcvP family. The glycine cleavage system is composed of four proteins: P, T, L and H. Requires pyridoxal 5'-phosphate as cofactor.

The enzyme catalyses N(6)-[(R)-lipoyl]-L-lysyl-[glycine-cleavage complex H protein] + glycine + H(+) = N(6)-[(R)-S(8)-aminomethyldihydrolipoyl]-L-lysyl-[glycine-cleavage complex H protein] + CO2. The glycine cleavage system catalyzes the degradation of glycine. The P protein binds the alpha-amino group of glycine through its pyridoxal phosphate cofactor; CO(2) is released and the remaining methylamine moiety is then transferred to the lipoamide cofactor of the H protein. This chain is Glycine dehydrogenase (decarboxylating), found in Mycobacterium tuberculosis (strain ATCC 25177 / H37Ra).